Reading from the N-terminus, the 682-residue chain is Heat shock 70 kDa protein, mitochondrial (682 aa).

The transit peptide at 1–57 (MATAALLRSLRRREFATSSISAYRTLASNTKPSWCPSLVGAKWAGLARPFSSKPAGN) directs the protein to the mitochondrion. Residues 649-682 (GEHMAGGSSGGASGGGGAQGGDQPPEAEYEEVKK) are disordered. Over residues 655–668 (GSSGGASGGGGAQG) the composition is skewed to gly residues. Acidic residues predominate over residues 673–682 (PEAEYEEVKK).

It belongs to the heat shock protein 70 family.

It localises to the mitochondrion. This is Heat shock 70 kDa protein, mitochondrial (HSP68) from Solanum tuberosum (Potato).